The sequence spans 160 residues: UPF0262 protein BCAN_A0255 (160 aa).

The protein belongs to the UPF0262 family.

This chain is UPF0262 protein BCAN_A0255, found in Brucella canis (strain ATCC 23365 / NCTC 10854 / RM-666).